Reading from the N-terminus, the 340-residue chain is DNA-directed RNA polymerase subunit alpha (340 aa).

The segment at 1–233 (MIRDEISVST…DLFIPFLRAE (233 aa)) is alpha N-terminal domain (alpha-NTD). Residues 268–340 (AFKHIFIDQS…DLPKNKFQIH (73 aa)) form an alpha C-terminal domain (alpha-CTD) region.

It belongs to the RNA polymerase alpha chain family. As to quaternary structure, in plastids the minimal PEP RNA polymerase catalytic core is composed of four subunits: alpha, beta, beta', and beta''. When a (nuclear-encoded) sigma factor is associated with the core the holoenzyme is formed, which can initiate transcription.

The protein localises to the plastid. It is found in the chloroplast. It carries out the reaction RNA(n) + a ribonucleoside 5'-triphosphate = RNA(n+1) + diphosphate. Functionally, DNA-dependent RNA polymerase catalyzes the transcription of DNA into RNA using the four ribonucleoside triphosphates as substrates. This Cycas taitungensis (Prince sago) protein is DNA-directed RNA polymerase subunit alpha.